We begin with the raw amino-acid sequence, 116 residues long: Large ribosomal subunit protein uL24 (116 aa).

This sequence belongs to the universal ribosomal protein uL24 family. As to quaternary structure, part of the 50S ribosomal subunit.

One of two assembly initiator proteins, it binds directly to the 5'-end of the 23S rRNA, where it nucleates assembly of the 50S subunit. In terms of biological role, located at the polypeptide exit tunnel on the outside of the subunit. This Methanothrix thermoacetophila (strain DSM 6194 / JCM 14653 / NBRC 101360 / PT) (Methanosaeta thermophila) protein is Large ribosomal subunit protein uL24.